The sequence spans 187 residues: Elongation factor P (187 aa).

It belongs to the elongation factor P family.

Its subcellular location is the cytoplasm. The protein operates within protein biosynthesis; polypeptide chain elongation. Its function is as follows. Involved in peptide bond synthesis. Stimulates efficient translation and peptide-bond synthesis on native or reconstituted 70S ribosomes in vitro. Probably functions indirectly by altering the affinity of the ribosome for aminoacyl-tRNA, thus increasing their reactivity as acceptors for peptidyl transferase. This is Elongation factor P from Prochlorococcus marinus (strain NATL2A).